Consider the following 688-residue polypeptide: Glycine--tRNA ligase beta subunit (688 aa).

Belongs to the class-II aminoacyl-tRNA synthetase family. In terms of assembly, tetramer of two alpha and two beta subunits.

It is found in the cytoplasm. It carries out the reaction tRNA(Gly) + glycine + ATP = glycyl-tRNA(Gly) + AMP + diphosphate. This chain is Glycine--tRNA ligase beta subunit, found in Vibrio parahaemolyticus serotype O3:K6 (strain RIMD 2210633).